The sequence spans 213 residues: Small ribosomal subunit protein uS7 (213 aa).

Belongs to the universal ribosomal protein uS7 family. Component of the small ribosomal subunit (SSU). Mature N.crassa ribosomes consist of a small (40S) and a large (60S) subunit. The 40S small subunit contains 1 molecule of ribosomal RNA (18S rRNA) and at least 32 different proteins. The large 60S subunit contains 3 rRNA molecules (26S, 5.8S and 5S rRNA) and at least 42 different proteins.

It localises to the cytoplasm. Its function is as follows. Component of the ribosome, a large ribonucleoprotein complex responsible for the synthesis of proteins in the cell. The small ribosomal subunit (SSU) binds messenger RNAs (mRNAs) and translates the encoded message by selecting cognate aminoacyl-transfer RNA (tRNA) molecules. The large subunit (LSU) contains the ribosomal catalytic site termed the peptidyl transferase center (PTC), which catalyzes the formation of peptide bonds, thereby polymerizing the amino acids delivered by tRNAs into a polypeptide chain. The nascent polypeptides leave the ribosome through a tunnel in the LSU and interact with protein factors that function in enzymatic processing, targeting, and the membrane insertion of nascent chains at the exit of the ribosomal tunnel. This Neurospora crassa (strain ATCC 24698 / 74-OR23-1A / CBS 708.71 / DSM 1257 / FGSC 987) protein is Small ribosomal subunit protein uS7 (rps-5).